Consider the following 211-residue polypeptide: tRNA (guanine-N(7)-)-methyltransferase (211 aa).

S-adenosyl-L-methionine is bound by residues Glu43, Asp68, and Asn117. Substrate contacts are provided by residues Lys121, Asp153, and 190-193 (TEYE).

It belongs to the class I-like SAM-binding methyltransferase superfamily. TrmB family.

It catalyses the reaction guanosine(46) in tRNA + S-adenosyl-L-methionine = N(7)-methylguanosine(46) in tRNA + S-adenosyl-L-homocysteine. It functions in the pathway tRNA modification; N(7)-methylguanine-tRNA biosynthesis. Functionally, catalyzes the formation of N(7)-methylguanine at position 46 (m7G46) in tRNA. This is tRNA (guanine-N(7)-)-methyltransferase from Clostridium acetobutylicum (strain ATCC 824 / DSM 792 / JCM 1419 / IAM 19013 / LMG 5710 / NBRC 13948 / NRRL B-527 / VKM B-1787 / 2291 / W).